Consider the following 339-residue polypeptide: DNA-directed RNA polymerase subunit alpha (339 aa).

The tract at residues 1 to 233 (MVREEVAGST…DLFLPFLHAE (233 aa)) is alpha N-terminal domain (alpha-NTD). The tract at residues 266 to 339 (GIPLNCIFID…IDLLKNKLSF (74 aa)) is alpha C-terminal domain (alpha-CTD).

The protein belongs to the RNA polymerase alpha chain family. As to quaternary structure, in plastids the minimal PEP RNA polymerase catalytic core is composed of four subunits: alpha, beta, beta', and beta''. When a (nuclear-encoded) sigma factor is associated with the core the holoenzyme is formed, which can initiate transcription.

The protein localises to the plastid. The protein resides in the chloroplast. The catalysed reaction is RNA(n) + a ribonucleoside 5'-triphosphate = RNA(n+1) + diphosphate. Its function is as follows. DNA-dependent RNA polymerase catalyzes the transcription of DNA into RNA using the four ribonucleoside triphosphates as substrates. This chain is DNA-directed RNA polymerase subunit alpha, found in Psathyrostachys juncea (Russian wildrye).